The primary structure comprises 334 residues: Non-functional pseudokinase ZED1 (334 aa).

In terms of domain architecture, Protein kinase spans 49–334 (FSESRIISSW…KELKLIEKLS (286 aa)). Residues 55–63 (ISSWGYFIW) and K76 each bind ATP. 2 positions are modified to O-acetylthreonine: T125 and T177.

Belongs to the protein kinase superfamily. Ser/Thr protein kinase family. ZRK subfamily. As to quaternary structure, interacts with RPP13L4/ZAR1. Component of an immune signaling complex made of, at least, SZE1, BKN2/SZE2, ZAR1 and ZED1. Binds directly to SZE1 at the plasma membrane. In terms of tissue distribution, expressed in seedlings, young leaves, floral organs, shoot apical meristems (SAM) and inflorescence stems.

The protein resides in the cytoplasm. It localises to the cytosol. It is found in the nucleus. Its subcellular location is the cell membrane. Functionally, together with RPP13L4/ZAR1, involved in the ambient temperature (above 22 degrees Celsius)-sensitive aerial organ development. Together with RPP13L4/ZAR1, involved in the regulation of the ambient temperature-sensitive intersection of growth and immune response in the absence of pathogens, by repressing the transcription of SNC1. Probable non-functional kinase required for recognition of the Pseudomonas syringae type III effector HopZ1a by RPP13L4/ZAR1 and, together with SZE1 and SZE2, to trigger subsequent defense responses. May function as a decoy to trap HopZ1a in the ZAR1 complex for recognition by the plant immune system. The polypeptide is Non-functional pseudokinase ZED1 (Arabidopsis thaliana (Mouse-ear cress)).